The following is a 216-amino-acid chain: Ras-related protein RABA1b (216 aa).

Gly20 to Ser27 is a binding site for GTP. The Effector region motif lies at Ser42–Phe50. Residues Asp68–Gln72, Asn126–Asp129, and Ser156–Ala157 each bind GTP. S-geranylgeranyl cysteine attachment occurs at residues Cys213 and Cys214.

Belongs to the small GTPase superfamily. Rab family.

The protein resides in the cell membrane. Functionally, intracellular vesicle trafficking and protein transport. The sequence is that of Ras-related protein RABA1b (RABA1B) from Arabidopsis thaliana (Mouse-ear cress).